An 804-amino-acid polypeptide reads, in one-letter code: Phenylalanine--tRNA ligase beta subunit (804 aa).

The tRNA-binding domain occupies 40–155 (DRGMKGVVIG…SDAPIGADAI (116 aa)). The B5 domain occupies 409–484 (QDSVVVTVTL…RLYGYDRLPA (76 aa)). Mg(2+) is bound by residues aspartate 462, aspartate 468, glutamate 471, and glutamate 472. The 94-residue stretch at 710 to 803 (PRFPSVVRDI…VEKQFGAVLR (94 aa)) folds into the FDX-ACB domain.

The protein belongs to the phenylalanyl-tRNA synthetase beta subunit family. Type 1 subfamily. Tetramer of two alpha and two beta subunits. Mg(2+) is required as a cofactor.

It is found in the cytoplasm. It catalyses the reaction tRNA(Phe) + L-phenylalanine + ATP = L-phenylalanyl-tRNA(Phe) + AMP + diphosphate + H(+). The sequence is that of Phenylalanine--tRNA ligase beta subunit from Geobacillus kaustophilus (strain HTA426).